A 127-amino-acid polypeptide reads, in one-letter code: Anti-adapter protein IraD (127 aa).

It belongs to the GpW/Gp25 family. IraD subfamily. As to quaternary structure, interacts with RssB.

The protein resides in the cytoplasm. Inhibits RpoS proteolysis by regulating RssB activity, thereby increasing the stability of the sigma stress factor RpoS during oxidative stress. Its effect on RpoS stability is due to its interaction with RssB, which probably blocks the interaction of RssB with RpoS, and the consequent delivery of the RssB-RpoS complex to the ClpXP protein degradation pathway. The protein is Anti-adapter protein IraD of Escherichia coli O6:K15:H31 (strain 536 / UPEC).